The sequence spans 100 residues: NADH-quinone oxidoreductase subunit K (100 aa).

A run of 3 helical transmembrane segments spans residues 1–21 (MIGL…GLAG), 28–48 (ILLL…GFVA), and 64–84 (FIIA…ILWF).

This sequence belongs to the complex I subunit 4L family. As to quaternary structure, NDH-1 is composed of 14 different subunits. Subunits NuoA, H, J, K, L, M, N constitute the membrane sector of the complex.

The protein localises to the cell inner membrane. It carries out the reaction a quinone + NADH + 5 H(+)(in) = a quinol + NAD(+) + 4 H(+)(out). Functionally, NDH-1 shuttles electrons from NADH, via FMN and iron-sulfur (Fe-S) centers, to quinones in the respiratory chain. The immediate electron acceptor for the enzyme in this species is believed to be ubiquinone. Couples the redox reaction to proton translocation (for every two electrons transferred, four hydrogen ions are translocated across the cytoplasmic membrane), and thus conserves the redox energy in a proton gradient. This Helicobacter pylori (strain P12) protein is NADH-quinone oxidoreductase subunit K.